Here is a 378-residue protein sequence, read N- to C-terminus: MEFRIDSIDGNARACTIKTEHSEIKTPIFMPVGTAAAVKSLDAIDMMEILDAPIILGNTYHLYLRPGDEIISKLGGLHGFSGYKRSFLTDSGGFQAFSLGDNVKFTDEGIWFKSHIDGSKHFFSPEKVIDIEYNLNSDIMMVLDDLIALPNTKERIKKSIERTTEWAYRSLVHHVNRGKKNNLFAIIQGGTDFEFRRISAESLVSLEYKGYTFDGFAIGGLSVGEENQLMYDTIEATTPYMPKDKPRYLMGVGTPEDIIEAVERGVDMFDCVMPTRNARNGYLFTTFGTLRIKNAKYKLDESPIDPKCNCYTCRNFSRAYLNHLFKAKELTYFRLASIHNLHYYLNFVKEIREAILEGRFKEYKKEFYSLRAMNSLEI.

D90 acts as the Proton acceptor in catalysis. Substrate contacts are provided by residues 90–94 (DSGGF), D144, Q188, and G220. An RNA binding region spans residues 251-257 (GVGTPED). The active-site Nucleophile is the D270. An RNA binding; important for wobble base 34 recognition region spans residues 275–279 (TRNAR). Zn(2+) is bound by residues C308, C310, C313, and H339.

The protein belongs to the queuine tRNA-ribosyltransferase family. In terms of assembly, homodimer. Within each dimer, one monomer is responsible for RNA recognition and catalysis, while the other monomer binds to the replacement base PreQ1. It depends on Zn(2+) as a cofactor.

The catalysed reaction is 7-aminomethyl-7-carbaguanine + guanosine(34) in tRNA = 7-aminomethyl-7-carbaguanosine(34) in tRNA + guanine. It functions in the pathway tRNA modification; tRNA-queuosine biosynthesis. Catalyzes the base-exchange of a guanine (G) residue with the queuine precursor 7-aminomethyl-7-deazaguanine (PreQ1) at position 34 (anticodon wobble position) in tRNAs with GU(N) anticodons (tRNA-Asp, -Asn, -His and -Tyr). Catalysis occurs through a double-displacement mechanism. The nucleophile active site attacks the C1' of nucleotide 34 to detach the guanine base from the RNA, forming a covalent enzyme-RNA intermediate. The proton acceptor active site deprotonates the incoming PreQ1, allowing a nucleophilic attack on the C1' of the ribose to form the product. After dissociation, two additional enzymatic reactions on the tRNA convert PreQ1 to queuine (Q), resulting in the hypermodified nucleoside queuosine (7-(((4,5-cis-dihydroxy-2-cyclopenten-1-yl)amino)methyl)-7-deazaguanosine). This chain is Queuine tRNA-ribosyltransferase, found in Nautilia profundicola (strain ATCC BAA-1463 / DSM 18972 / AmH).